Reading from the N-terminus, the 278-residue chain is tRNA uridine(34) hydroxylase (278 aa).

The 95-residue stretch at 122 to 216 (QDPDVVVIDT…YLETIAPEES (95 aa)) folds into the Rhodanese domain. C176 functions as the Cysteine persulfide intermediate in the catalytic mechanism.

It belongs to the TrhO family.

It catalyses the reaction uridine(34) in tRNA + AH2 + O2 = 5-hydroxyuridine(34) in tRNA + A + H2O. In terms of biological role, catalyzes oxygen-dependent 5-hydroxyuridine (ho5U) modification at position 34 in tRNAs. The protein is tRNA uridine(34) hydroxylase of Synechocystis sp. (strain ATCC 27184 / PCC 6803 / Kazusa).